Here is a 266-residue protein sequence, read N- to C-terminus: Elongation factor Ts (266 aa).

The tract at residues 80–83 (TDFV) is involved in Mg(2+) ion dislocation from EF-Tu.

Belongs to the EF-Ts family.

It is found in the cytoplasm. Its function is as follows. Associates with the EF-Tu.GDP complex and induces the exchange of GDP to GTP. It remains bound to the aminoacyl-tRNA.EF-Tu.GTP complex up to the GTP hydrolysis stage on the ribosome. The sequence is that of Elongation factor Ts from Buchnera aphidicola subsp. Baizongia pistaciae (strain Bp).